The primary structure comprises 364 residues: Dual-specificity RNA methyltransferase RlmN (364 aa).

Residue E91 is the Proton acceptor of the active site. In terms of domain architecture, Radical SAM core spans 97-333 (ESDRGTLCIS…VTVRKTRGDD (237 aa)). C104 and C338 are joined by a disulfide. Positions 111, 115, and 118 each coordinate [4Fe-4S] cluster. S-adenosyl-L-methionine is bound by residues 164-165 (GE), S196, 218-220 (SLH), and N295. Residue C338 is the S-methylcysteine intermediate of the active site.

This sequence belongs to the radical SAM superfamily. RlmN family. [4Fe-4S] cluster is required as a cofactor.

The protein localises to the cytoplasm. The catalysed reaction is adenosine(2503) in 23S rRNA + 2 reduced [2Fe-2S]-[ferredoxin] + 2 S-adenosyl-L-methionine = 2-methyladenosine(2503) in 23S rRNA + 5'-deoxyadenosine + L-methionine + 2 oxidized [2Fe-2S]-[ferredoxin] + S-adenosyl-L-homocysteine. The enzyme catalyses adenosine(37) in tRNA + 2 reduced [2Fe-2S]-[ferredoxin] + 2 S-adenosyl-L-methionine = 2-methyladenosine(37) in tRNA + 5'-deoxyadenosine + L-methionine + 2 oxidized [2Fe-2S]-[ferredoxin] + S-adenosyl-L-homocysteine. In terms of biological role, specifically methylates position 2 of adenine 2503 in 23S rRNA and position 2 of adenine 37 in tRNAs. m2A2503 modification seems to play a crucial role in the proofreading step occurring at the peptidyl transferase center and thus would serve to optimize ribosomal fidelity. The chain is Dual-specificity RNA methyltransferase RlmN from Neisseria gonorrhoeae (strain ATCC 700825 / FA 1090).